The sequence spans 320 residues: L-lactate dehydrogenase 2 (320 aa).

Residues Val-16, Asp-37, Lys-42, and Tyr-69 each contribute to the NAD(+) site. Residue Arg-94 participates in substrate binding. Residues Ser-107, 124-126 (VTN), and Thr-149 contribute to the NAD(+) site. 126–129 (NPVD) provides a ligand contact to substrate. 154 to 157 (DTAR) contributes to the substrate binding site. Arg-159 and His-174 together coordinate beta-D-fructose 1,6-bisphosphate. Residue His-181 is the Proton acceptor of the active site. Thr-235 provides a ligand contact to substrate.

This sequence belongs to the LDH/MDH superfamily. LDH family. As to quaternary structure, homotetramer.

Its subcellular location is the cytoplasm. It catalyses the reaction (S)-lactate + NAD(+) = pyruvate + NADH + H(+). The protein operates within fermentation; pyruvate fermentation to lactate; (S)-lactate from pyruvate: step 1/1. Its activity is regulated as follows. Allosterically activated by fructose 1,6-bisphosphate (FBP). In terms of biological role, catalyzes the conversion of lactate to pyruvate. The polypeptide is L-lactate dehydrogenase 2 (Clostridium acetobutylicum (strain ATCC 824 / DSM 792 / JCM 1419 / IAM 19013 / LMG 5710 / NBRC 13948 / NRRL B-527 / VKM B-1787 / 2291 / W)).